We begin with the raw amino-acid sequence, 925 residues long: MTKNSSTVFTHARIATLEEKAANLGLIEEAALVVKDARIVYAGPENKLPDEYASFEKIDCGNRLITPGLIDCHTHLVHAGNRAHEFELRLQGATYEEVARAGGGIVSSVRNLRAASEDDLVRETLPRLDALIAEGVTTVEVKSGYGLDRDSEIKSLKAARRLGEERDVAIRTTFLGAHALPPEMNGDKAAYIDRVINDMLPAIAEQGLADAVDGFCEGIAFLPDEIARVFDAAKAHDIPVKLHADQLSNLHGAALAASYGALSADHLEYTDADGAAAMASAGTVAVLLPGAYYFIRETQKPPVEAFRAAGTKMALATDNNPGTSPLTSLLLTMNMGATLFRMTVEECIAGVTREAARALGILDQTGTLEIGKDADLAIWDIERPAELVYRIGFNPLWKRVFKGQIKPHVRMEPFMTIILKPGSVPLETLEKIYREGLPVRIDPAFHAGIEKAAARIAEIAAGDAPVYGINTGFGKLASIRIAAGDVATLQRNLILSHCCGVGEPLSENIVRLIMALKLVSLGRGASGVQLEVITLIEAMLEKGVIPMIPEKGSVGASGDLAPLAHMTAAMIGEGEAFYRGERLSGAKALGKAGLKPVVLAAKEGLALINGTQTSTALALAGLFRAHRAARTALITGALSTDAAMGSDAPFHEEIHQLRGHKGQIDAGRALRTLLEGSAIRRSHLEGDQRVQDPYCXRCQPQVDGACLDILRQAARTLEIEANAVTDNPLVLSDGRAVSGGNFHAEPVAFAADQIALAVCEIGAISQRRIALLVDPSLSFGLPAFLARKPGLNSGLMIAEVTSAALMSENKQMAHPASVDSTPTSANQEDHVSMACHGARRLLQMTANLNAIIGIEALTGALGVELRKPLTTSAELAKVIAALRAKVATLEEDRYMADDLKAAAELVADGTLSGVISAGILPDLEA.

The imidazolonepropionase stretch occupies residues Met-1–Phe-414. Fe(3+) is bound by residues His-73 and His-75. Residues His-73 and His-75 each contribute to the Zn(2+) site. Residues Arg-82, Tyr-145, and His-178 each coordinate 4-imidazolone-5-propanoate. Tyr-145 contributes to the N-formimidoyl-L-glutamate binding site. His-243 contributes to the Fe(3+) binding site. Residue His-243 participates in Zn(2+) binding. Residue Gln-246 coordinates 4-imidazolone-5-propanoate. Asp-318 contacts Fe(3+). Zn(2+) is bound at residue Asp-318. N-formimidoyl-L-glutamate-binding residues include Asn-320 and Gly-322. 4-imidazolone-5-propanoate is bound at residue Thr-323. Residues Met-415–Ala-925 are histidine ammonia-lyase. Positions Ala-556–Gly-558 form a cross-link, 5-imidazolinone (Ala-Gly). Ser-557 carries the post-translational modification 2,3-didehydroalanine (Ser).

In the N-terminal section; belongs to the metallo-dependent hydrolases superfamily. HutI family. This sequence in the C-terminal section; belongs to the PAL/histidase family. Zn(2+) serves as cofactor. It depends on Fe(3+) as a cofactor. Contains an active site 4-methylidene-imidazol-5-one (MIO), which is formed autocatalytically by cyclization and dehydration of residues Ala-Ser-Gly.

The protein localises to the cytoplasm. The enzyme catalyses 4-imidazolone-5-propanoate + H2O = N-formimidoyl-L-glutamate. It catalyses the reaction L-histidine = trans-urocanate + NH4(+). It participates in amino-acid degradation; L-histidine degradation into L-glutamate; N-formimidoyl-L-glutamate from L-histidine: step 1/3. The protein operates within amino-acid degradation; L-histidine degradation into L-glutamate; N-formimidoyl-L-glutamate from L-histidine: step 3/3. Catalyzes the hydrolytic cleavage of the carbon-nitrogen bond in imidazolone-5-propanoate to yield N-formimidoyl-L-glutamate. It is the third step in the universal histidine degradation pathway. The protein is Bifunctional imidazolonepropionase/histidine ammonia-lyase (hutIH) of Brucella melitensis biotype 1 (strain ATCC 23456 / CCUG 17765 / NCTC 10094 / 16M).